A 202-amino-acid polypeptide reads, in one-letter code: Imidazoleglycerol-phosphate dehydratase (202 aa).

This sequence belongs to the imidazoleglycerol-phosphate dehydratase family.

The protein resides in the cytoplasm. The catalysed reaction is D-erythro-1-(imidazol-4-yl)glycerol 3-phosphate = 3-(imidazol-4-yl)-2-oxopropyl phosphate + H2O. It participates in amino-acid biosynthesis; L-histidine biosynthesis; L-histidine from 5-phospho-alpha-D-ribose 1-diphosphate: step 6/9. This Brucella anthropi (strain ATCC 49188 / DSM 6882 / CCUG 24695 / JCM 21032 / LMG 3331 / NBRC 15819 / NCTC 12168 / Alc 37) (Ochrobactrum anthropi) protein is Imidazoleglycerol-phosphate dehydratase.